Reading from the N-terminus, the 269-residue chain is Meiotic drive suppressor wtf5 (269 aa).

Positions 1–65 are disordered; that stretch reads MKNNYTSLKS…NTHRENHSYG (65 aa). The segment covering 19-30 has biased composition (basic and acidic residues); the sequence is KTDHEIDLEKGP. 3 helical membrane passes run 73-95, 110-132, and 206-228; these read LLII…VCYL, WTLF…YFYE, and WGLK…VFIA.

Belongs to the WTF family. Homomer. Interacts with other proteins that exhibit high sequence similarity.

The protein localises to the spore membrane. It is found in the vacuole membrane. Acts as a suppressor component of the dual wtf meiotic drive system, and can suppress but not confer meiotic drive by compatible poisons. Wtf meiotic drive systems promote unequal transmission of alleles from the parental zygote to progeny spores by encoding a poison and an antidote from the same locus; the poison is trans-acting and forms toxic aggregates in all spores within an ascus, wherease the antidote is spore-specific and targets aggregates for degradation by the vacuole. Meiotic drive by wtf systems therefore lead to poisoning of all progeny that do not inherit the dual poison/antidote allele, or express a compatible antidote. This is Meiotic drive suppressor wtf5 from Schizosaccharomyces pombe (strain 972 / ATCC 24843) (Fission yeast).